The sequence spans 226 residues: ATP synthase F(0) complex subunit a (226 aa).

6 consecutive transmembrane segments (helical) span residues 6–26 (FAPFITPTILGITTLPIIITF), 68–88 (WTLMLMSLILFIASTNLLGLL), 97–117 (QLSMNIGMAIPLWAGTVIMGF), 138–158 (IPMLIIIETISLFIQPLALAV), 164–184 (ITAGHLLIHLIGSATLALSSI), and 195–215 (ILFLLTLLEIAVAMIQAYVFT).

It belongs to the ATPase A chain family. Component of the ATP synthase complex composed at least of ATP5F1A/subunit alpha, ATP5F1B/subunit beta, ATP5MC1/subunit c (homooctomer), MT-ATP6/subunit a, MT-ATP8/subunit 8, ATP5ME/subunit e, ATP5MF/subunit f, ATP5MG/subunit g, ATP5MK/subunit k, ATP5MJ/subunit j, ATP5F1C/subunit gamma, ATP5F1D/subunit delta, ATP5F1E/subunit epsilon, ATP5PF/subunit F6, ATP5PB/subunit b, ATP5PD/subunit d, ATP5PO/subunit OSCP. ATP synthase complex consists of a soluble F(1) head domain (subunits alpha(3) and beta(3)) - the catalytic core - and a membrane F(0) domain - the membrane proton channel (subunits c, a, 8, e, f, g, k and j). These two domains are linked by a central stalk (subunits gamma, delta, and epsilon) rotating inside the F1 region and a stationary peripheral stalk (subunits F6, b, d, and OSCP). Interacts with DNAJC30; interaction is direct.

The protein localises to the mitochondrion inner membrane. The catalysed reaction is H(+)(in) = H(+)(out). Subunit a, of the mitochondrial membrane ATP synthase complex (F(1)F(0) ATP synthase or Complex V) that produces ATP from ADP in the presence of a proton gradient across the membrane which is generated by electron transport complexes of the respiratory chain. ATP synthase complex consist of a soluble F(1) head domain - the catalytic core - and a membrane F(1) domain - the membrane proton channel. These two domains are linked by a central stalk rotating inside the F(1) region and a stationary peripheral stalk. During catalysis, ATP synthesis in the catalytic domain of F(1) is coupled via a rotary mechanism of the central stalk subunits to proton translocation. With the subunit c (ATP5MC1), forms the proton-conducting channel in the F(0) domain, that contains two crucial half-channels (inlet and outlet) that facilitate proton movement from the mitochondrial intermembrane space (IMS) into the matrix. Protons are taken up via the inlet half-channel and released through the outlet half-channel, following a Grotthuss mechanism. This chain is ATP synthase F(0) complex subunit a, found in Didelphis virginiana (North American opossum).